The primary structure comprises 335 residues: 4-hydroxy-3-methylbut-2-enyl diphosphate reductase (335 aa).

C14 contacts [4Fe-4S] cluster. (2E)-4-hydroxy-3-methylbut-2-enyl diphosphate contacts are provided by H43 and H81. Positions 43 and 81 each coordinate dimethylallyl diphosphate. Isopentenyl diphosphate-binding residues include H43 and H81. Residue C103 participates in [4Fe-4S] cluster binding. H132 is a binding site for (2E)-4-hydroxy-3-methylbut-2-enyl diphosphate. Residue H132 participates in dimethylallyl diphosphate binding. H132 is an isopentenyl diphosphate binding site. Residue E134 is the Proton donor of the active site. A (2E)-4-hydroxy-3-methylbut-2-enyl diphosphate-binding site is contributed by T179. Residue C209 coordinates [4Fe-4S] cluster. Residues S237, S238, N239, and S285 each coordinate (2E)-4-hydroxy-3-methylbut-2-enyl diphosphate. Positions 237, 238, 239, and 285 each coordinate dimethylallyl diphosphate. Isopentenyl diphosphate contacts are provided by S237, S238, N239, and S285.

The protein belongs to the IspH family. The cofactor is [4Fe-4S] cluster.

It carries out the reaction isopentenyl diphosphate + 2 oxidized [2Fe-2S]-[ferredoxin] + H2O = (2E)-4-hydroxy-3-methylbut-2-enyl diphosphate + 2 reduced [2Fe-2S]-[ferredoxin] + 2 H(+). The catalysed reaction is dimethylallyl diphosphate + 2 oxidized [2Fe-2S]-[ferredoxin] + H2O = (2E)-4-hydroxy-3-methylbut-2-enyl diphosphate + 2 reduced [2Fe-2S]-[ferredoxin] + 2 H(+). It functions in the pathway isoprenoid biosynthesis; dimethylallyl diphosphate biosynthesis; dimethylallyl diphosphate from (2E)-4-hydroxy-3-methylbutenyl diphosphate: step 1/1. Its pathway is isoprenoid biosynthesis; isopentenyl diphosphate biosynthesis via DXP pathway; isopentenyl diphosphate from 1-deoxy-D-xylulose 5-phosphate: step 6/6. Its function is as follows. Catalyzes the conversion of 1-hydroxy-2-methyl-2-(E)-butenyl 4-diphosphate (HMBPP) into a mixture of isopentenyl diphosphate (IPP) and dimethylallyl diphosphate (DMAPP). Acts in the terminal step of the DOXP/MEP pathway for isoprenoid precursor biosynthesis. The protein is 4-hydroxy-3-methylbut-2-enyl diphosphate reductase of Deinococcus radiodurans (strain ATCC 13939 / DSM 20539 / JCM 16871 / CCUG 27074 / LMG 4051 / NBRC 15346 / NCIMB 9279 / VKM B-1422 / R1).